The following is a 446-amino-acid chain: Bifunctional protein GlmU (446 aa).

Residues 1 to 226 (MLAIAILAAG…PFEIKGINDR (226 aa)) form a pyrophosphorylase region. Residues 7–10 (LAAG), Lys21, Gln73, and 78–79 (GT) contribute to the UDP-N-acetyl-alpha-D-glucosamine site. Asp103 is a Mg(2+) binding site. 4 residues coordinate UDP-N-acetyl-alpha-D-glucosamine: Gly140, Glu155, Asn170, and Asn224. Residue Asn224 participates in Mg(2+) binding. A linker region spans residues 227 to 247 (VQLSECEHYIQEELKSLWMSK). The N-acetyltransferase stretch occupies residues 248–446 (GVSFVDPISC…SKAIIRTKAD (199 aa)). Residues Arg329 and Lys347 each coordinate UDP-N-acetyl-alpha-D-glucosamine. Residue His359 is the Proton acceptor of the active site. UDP-N-acetyl-alpha-D-glucosamine contacts are provided by Tyr362 and Asn373. Acetyl-CoA contacts are provided by Ala376, Ala419, and Arg436.

This sequence in the N-terminal section; belongs to the N-acetylglucosamine-1-phosphate uridyltransferase family. In the C-terminal section; belongs to the transferase hexapeptide repeat family. As to quaternary structure, homotrimer. Requires Mg(2+) as cofactor.

The protein resides in the cytoplasm. The enzyme catalyses alpha-D-glucosamine 1-phosphate + acetyl-CoA = N-acetyl-alpha-D-glucosamine 1-phosphate + CoA + H(+). It carries out the reaction N-acetyl-alpha-D-glucosamine 1-phosphate + UTP + H(+) = UDP-N-acetyl-alpha-D-glucosamine + diphosphate. It functions in the pathway nucleotide-sugar biosynthesis; UDP-N-acetyl-alpha-D-glucosamine biosynthesis; N-acetyl-alpha-D-glucosamine 1-phosphate from alpha-D-glucosamine 6-phosphate (route II): step 2/2. It participates in nucleotide-sugar biosynthesis; UDP-N-acetyl-alpha-D-glucosamine biosynthesis; UDP-N-acetyl-alpha-D-glucosamine from N-acetyl-alpha-D-glucosamine 1-phosphate: step 1/1. The protein operates within bacterial outer membrane biogenesis; LPS lipid A biosynthesis. In terms of biological role, catalyzes the last two sequential reactions in the de novo biosynthetic pathway for UDP-N-acetylglucosamine (UDP-GlcNAc). The C-terminal domain catalyzes the transfer of acetyl group from acetyl coenzyme A to glucosamine-1-phosphate (GlcN-1-P) to produce N-acetylglucosamine-1-phosphate (GlcNAc-1-P), which is converted into UDP-GlcNAc by the transfer of uridine 5-monophosphate (from uridine 5-triphosphate), a reaction catalyzed by the N-terminal domain. This chain is Bifunctional protein GlmU, found in Prochlorococcus marinus (strain NATL2A).